The chain runs to 287 residues: ATP synthase gamma chain (287 aa).

Belongs to the ATPase gamma chain family. In terms of assembly, F-type ATPases have 2 components, CF(1) - the catalytic core - and CF(0) - the membrane proton channel. CF(1) has five subunits: alpha(3), beta(3), gamma(1), delta(1), epsilon(1). CF(0) has three main subunits: a, b and c.

It localises to the cell inner membrane. Functionally, produces ATP from ADP in the presence of a proton gradient across the membrane. The gamma chain is believed to be important in regulating ATPase activity and the flow of protons through the CF(0) complex. This chain is ATP synthase gamma chain, found in Azotobacter vinelandii (strain DJ / ATCC BAA-1303).